Consider the following 262-residue polypeptide: Spindlin-Z (262 aa).

Positions 1 to 50 (MKTPFGKSPGQRSRADAGHAGVSASMMKKRTSHKKHRNNVGPSKPISQPR) are disordered. Positions 27–38 (MKKRTSHKKHRN) are enriched in basic residues.

It belongs to the SPIN/STSY family. As to expression, expressed in several tissues including testis.

It localises to the nucleus. In terms of biological role, may play a role in mitosis. The polypeptide is Spindlin-Z (SPINZ) (Gallus gallus (Chicken)).